We begin with the raw amino-acid sequence, 736 residues long: Dynamin-1-like protein (736 aa).

Met-1 bears the N-acetylmethionine mark. One can recognise a Dynamin-type G domain in the interval 22 to 302; that stretch reads IIQLPQIVVV…LMHHIRDCLP (281 aa). The segment at 32 to 39 is G1 motif; that stretch reads GTQSSGKS. Position 32–40 (32–40) interacts with GTP; it reads GTQSSGKSS. Positions 58–60 are G2 motif; it reads VTR. A G3 motif region spans residues 146–149; it reads DLPG. The G4 motif stretch occupies residues 215–218; the sequence is TKLD. GTP is bound by residues 215-221 and 246-249; these read TKLDLMD and NRSQ. The tract at residues 245–248 is G5 motif; it reads VNRS. The middle domain stretch occupies residues 344-489; sequence YCNTIEGTAK…NEMVHNLVAI (146 aa). The segment at 448–685 is interaction with GSK3B; the sequence is NYSTQELLRF…NHVKDTLQSE (238 aa). A b domain region spans residues 502–569; sequence ADACGLMNNN…IQDSRRETKN (68 aa). The tract at residues 523–590 is disordered; it reads ELPSAVSRDK…VQEPTTGNWR (68 aa). Ser-529 bears the Phosphoserine mark. Residues Lys-532 and Lys-535 each participate in a glycyl lysine isopeptide (Lys-Gly) (interchain with G-Cter in SUMO) cross-link. Low complexity predominate over residues 537-554; the sequence is PSALAPASQEPSPAASAE. At Ser-548 the chain carries Phosphoserine. A compositionally biased stretch (basic and acidic residues) spans 555–568; it reads ADGKLIQDSRRETK. Residues Lys-558 and Lys-568 each participate in a glycyl lysine isopeptide (Lys-Gly) (interchain with G-Cter in SUMO) cross-link. O-linked (GlcNAc) threonine glycosylation is found at Thr-585 and Thr-586. Lys-594 is covalently cross-linked (Glycyl lysine isopeptide (Lys-Gly) (interchain with G-Cter in SUMO)). Lys-597 is modified (N6-acetyllysine; alternate). Residue Lys-597 forms a Glycyl lysine isopeptide (Lys-Gly) (interchain with G-Cter in SUMO); alternate linkage. Residue Lys-606 forms a Glycyl lysine isopeptide (Lys-Gly) (interchain with G-Cter in SUMO) linkage. Phosphoserine is present on Ser-607. Lys-608 is covalently cross-linked (Glycyl lysine isopeptide (Lys-Gly) (interchain with G-Cter in SUMO)). The residue at position 616 (Ser-616) is a Phosphoserine; by CDK1 and PINK1. Ser-637 is subject to Phosphoserine; by CAMK1 and PKA. Cys-644 is modified (S-nitrosocysteine). The GED domain maps to 644–735; the sequence is CEVIERLIKS…IIAEIRETHL (92 aa). The interval 654–668 is important for homodimerization; that stretch reads YFLIVRKNIQDSVPK.

The protein belongs to the TRAFAC class dynamin-like GTPase superfamily. Dynamin/Fzo/YdjA family. As to quaternary structure, homotetramer; dimerizes through the N-terminal GTP-middle region of one molecule binding to the GED domain of another DNM1L molecule. Oligomerizes in a GTP-dependent manner to form membrane-associated tubules with a spiral pattern. Interacts with GSK3B and MARCHF5. Interacts (via the GTPase and B domains) with UBE2I; the interaction promotes sumoylation of DNM1L, mainly in its B domain. Interacts with PPP3CA; the interaction dephosphorylates DNM1L and regulates its transition to mitochondria. Interacts with BCL2L1 isoform BCL-X(L) and CLTA; DNM1L and BCL2L1 isoform BCL-X(L) may form a complex in synaptic vesicles that also contains clathrin and MFF. Interacts with MFF; the interaction is inhibited by C11orf65/MFI. Interacts with FIS1; may form part of a larger protein complex at the endoplasmic reticulum-mitochondrial interface during mitochondrial fission. Interacts with CANX. Interacts with BCAP31. Interacts with MIEF2 and MIEF1; GTP-dependent, regulates GTP hydrolysis and DNM1L oligomerization. Interacts with PGAM5; this interaction leads to dephosphorylation at Ser-656 and activation of GTPase activity and eventually to mitochondria fragmentation. Interacts with RALBP1; during mitosis, recruits DNM1L to the mitochondrion and mediates its activation by the mitotic kinase cyclin B-CDK1. Interacts with FUNDC1; this interaction recruits DNM1L/DRP1 at ER-mitochondria contact sites. Phosphorylation/dephosphorylation events on two sites near the GED domain regulate mitochondrial fission. Phosphorylation on Ser-637 by CAMK1 and PKA inhibits the GTPase activity, leading to a defect in mitochondrial fission promoting mitochondrial elongation. Dephosphorylated on this site by PPP3CA which promotes mitochondrial fission. Phosphorylation on Ser-616 by CDK1 and PINK1 activates the GTPase activity and promotes mitochondrial fission. Phosphorylated in a circadian manner at Ser-637. Dephosphorylated by PGAM5. In terms of processing, sumoylated on various lysine residues within the B domain, probably by MUL1. Sumoylation positively regulates mitochondrial fission. Desumoylated by SENP5 during G2/M transition of mitosis. Appears to be linked to its catalytic activity. Post-translationally, S-nitrosylation increases DNM1L dimerization, mitochondrial fission and causes neuronal damage. Ubiquitination by MARCHF5 affects mitochondrial morphology. In terms of processing, O-GlcNAcylation augments the level of the GTP-bound active form of DNM1L and induces translocation from the cytoplasm to mitochondria in cardiomyocytes. It also decreases phosphorylation at Ser-637. As to expression, ubiquitously expressed with highest levels found in skeletal muscles, heart, kidney and brain. Isoform 1 is brain-specific. Isoform 2 and isoform 3 are predominantly expressed in testis and skeletal muscles respectively. Isoform 4 is weakly expressed in brain, heart and kidney. Isoform 5 is dominantly expressed in liver, heart and kidney. Isoform 6 is expressed in neurons.

The protein localises to the cytoplasm. Its subcellular location is the cytosol. It is found in the golgi apparatus. It localises to the endomembrane system. The protein resides in the mitochondrion outer membrane. The protein localises to the peroxisome. Its subcellular location is the membrane. It is found in the clathrin-coated pit. It localises to the cytoplasmic vesicle. The protein resides in the secretory vesicle. The protein localises to the synaptic vesicle membrane. The catalysed reaction is GTP + H2O = GDP + phosphate + H(+). GTPase activity is increased by binding to phospholipid membranes. Functions in mitochondrial and peroxisomal division. Mediates membrane fission through oligomerization into membrane-associated tubular structures that wrap around the scission site to constrict and sever the mitochondrial membrane through a GTP hydrolysis-dependent mechanism. The specific recruitment at scission sites is mediated by membrane receptors like MFF, MIEF1 and MIEF2 for mitochondrial membranes. While the recruitment by the membrane receptors is GTP-dependent, the following hydrolysis of GTP induces the dissociation from the receptors and allows DNM1L filaments to curl into closed rings that are probably sufficient to sever a double membrane. Acts downstream of PINK1 to promote mitochondrial fission in a PRKN-dependent manner. Plays an important role in mitochondrial fission during mitosis. Through its function in mitochondrial division, ensures the survival of at least some types of postmitotic neurons, including Purkinje cells, by suppressing oxidative damage. Required for normal brain development, including that of cerebellum. Facilitates developmentally regulated apoptosis during neural tube formation. Required for a normal rate of cytochrome c release and caspase activation during apoptosis; this requirement may depend upon the cell type and the physiological apoptotic cues. Required for formation of endocytic vesicles. Proposed to regulate synaptic vesicle membrane dynamics through association with BCL2L1 isoform Bcl-X(L) which stimulates its GTPase activity in synaptic vesicles; the function may require its recruitment by MFF to clathrin-containing vesicles. Required for programmed necrosis execution. Rhythmic control of its activity following phosphorylation at Ser-637 is essential for the circadian control of mitochondrial ATP production. In terms of biological role, inhibits peroxisomal division when overexpressed. The chain is Dynamin-1-like protein from Homo sapiens (Human).